The chain runs to 241 residues: Beta-nerve growth factor (241 aa).

The signal sequence occupies residues 1–18; sequence MSMLFYTLITALLIGVQA. Positions 19-121 are excised as a propeptide; it reads EPYTDSNLPE…SFNRTHRSKR (103 aa). N-linked (GlcNAc...) asparagine glycosylation is found at asparagine 69, asparagine 114, and asparagine 166. Disulfide bonds link cysteine 136–cysteine 201, cysteine 179–cysteine 229, and cysteine 189–cysteine 231.

Belongs to the NGF-beta family. As to quaternary structure, homodimer. The homodimer interacts with a single NTRK1 chain. The homodimer interacts with a single NGFR chain. The NGF dimer interacts with a single SORCS2 chain (via extracellular domain). The NGF precursor (proNGF) binds to a receptor complex formed by SORT1 and NGFR, which leads to NGF endocytosis. Both mature NGF and the immature NGF precursor (proNGF) interact with SORCS2 and with the heterodimer formed by SORCS2 and NGFR (via extracellular domains). The NGF precursor (proNGF) has much higher affinity for SORCS2 than mature NGF. The NGF precursor (proNGF) has much higher affinity for SORT1 than mature NGF. Interacts with ADAM10 in a divalent cation-dependent manner. Interacts with SORCS3.

The protein localises to the secreted. It localises to the endosome lumen. Functionally, nerve growth factor is important for the development and maintenance of the sympathetic and sensory nervous systems. Extracellular ligand for the NTRK1 and NGFR receptors, activates cellular signaling cascades through those receptor tyrosine kinase to regulate neuronal proliferation, differentiation and survival. Inhibits metalloproteinase dependent proteolysis of platelet glycoprotein VI. The protein is Beta-nerve growth factor (NGF) of Mastomys natalensis (African soft-furred rat).